Consider the following 364-residue polypeptide: Adenine deaminase (364 aa).

3 residues coordinate Zn(2+): His-25, His-27, and His-221. Residue Glu-224 is the Proton donor of the active site. Asp-301 lines the Zn(2+) pocket. Asp-302 lines the substrate pocket.

The protein belongs to the metallo-dependent hydrolases superfamily. Adenosine and AMP deaminases family. Adenine deaminase type 2 subfamily. Zn(2+) serves as cofactor.

It localises to the cytoplasm. It is found in the nucleus. The enzyme catalyses adenine + H2O + H(+) = hypoxanthine + NH4(+). Catalyzes the hydrolytic deamination of adenine to hypoxanthine. Plays an important role in the purine salvage pathway and in nitrogen catabolism. Has no activity with adenosine as a substrate. The sequence is that of Adenine deaminase (aah1) from Emericella nidulans (strain FGSC A4 / ATCC 38163 / CBS 112.46 / NRRL 194 / M139) (Aspergillus nidulans).